Consider the following 487-residue polypeptide: Malonate-semialdehyde dehydrogenase (487 aa).

NAD(+) contacts are provided by A150, F152, K176, E179, R180, S229, and T251. C284 acts as the Nucleophile in catalysis. E382 provides a ligand contact to NAD(+).

The protein belongs to the aldehyde dehydrogenase family. IolA subfamily. As to quaternary structure, homotetramer.

The catalysed reaction is 3-oxopropanoate + NAD(+) + CoA + H2O = hydrogencarbonate + acetyl-CoA + NADH + H(+). It catalyses the reaction 2-methyl-3-oxopropanoate + NAD(+) + CoA + H2O = propanoyl-CoA + hydrogencarbonate + NADH + H(+). Its pathway is polyol metabolism; myo-inositol degradation into acetyl-CoA; acetyl-CoA from myo-inositol: step 7/7. Functionally, catalyzes the oxidation of malonate semialdehyde (MSA) and methylmalonate semialdehyde (MMSA) into acetyl-CoA and propanoyl-CoA, respectively. Is involved in a myo-inositol catabolic pathway. Bicarbonate, and not CO2, is the end-product of the enzymatic reaction. In Bacillus subtilis subsp. natto, this protein is Malonate-semialdehyde dehydrogenase.